The chain runs to 324 residues: Biotin synthase (324 aa).

The 229-residue stretch at 50–278 folds into the Radical SAM core domain; the sequence is HAGPAFTCAI…QADILVAGGR (229 aa). Residues Cys67, Cys71, and Cys74 each coordinate [4Fe-4S] cluster. 2 residues coordinate [2Fe-2S] cluster: Cys143 and Cys203.

Belongs to the radical SAM superfamily. Biotin synthase family. Homodimer. It depends on [4Fe-4S] cluster as a cofactor. Requires [2Fe-2S] cluster as cofactor.

It carries out the reaction (4R,5S)-dethiobiotin + (sulfur carrier)-SH + 2 reduced [2Fe-2S]-[ferredoxin] + 2 S-adenosyl-L-methionine = (sulfur carrier)-H + biotin + 2 5'-deoxyadenosine + 2 L-methionine + 2 oxidized [2Fe-2S]-[ferredoxin]. Its pathway is cofactor biosynthesis; biotin biosynthesis; biotin from 7,8-diaminononanoate: step 2/2. Catalyzes the conversion of dethiobiotin (DTB) to biotin by the insertion of a sulfur atom into dethiobiotin via a radical-based mechanism. This chain is Biotin synthase, found in Oleidesulfovibrio alaskensis (strain ATCC BAA-1058 / DSM 17464 / G20) (Desulfovibrio alaskensis).